The primary structure comprises 173 residues: ATP synthase subunit b (173 aa).

Residues 15 to 35 (LYVGDMLFYAILFIVLMALIA) traverse the membrane as a helical segment.

It belongs to the ATPase B chain family. As to quaternary structure, F-type ATPases have 2 components, F(1) - the catalytic core - and F(0) - the membrane proton channel. F(1) has five subunits: alpha(3), beta(3), gamma(1), delta(1), epsilon(1). F(0) has three main subunits: a(1), b(2) and c(10-14). The alpha and beta chains form an alternating ring which encloses part of the gamma chain. F(1) is attached to F(0) by a central stalk formed by the gamma and epsilon chains, while a peripheral stalk is formed by the delta and b chains.

It is found in the cell membrane. Its function is as follows. F(1)F(0) ATP synthase produces ATP from ADP in the presence of a proton or sodium gradient. F-type ATPases consist of two structural domains, F(1) containing the extramembraneous catalytic core and F(0) containing the membrane proton channel, linked together by a central stalk and a peripheral stalk. During catalysis, ATP synthesis in the catalytic domain of F(1) is coupled via a rotary mechanism of the central stalk subunits to proton translocation. In terms of biological role, component of the F(0) channel, it forms part of the peripheral stalk, linking F(1) to F(0). In Pediococcus pentosaceus (strain ATCC 25745 / CCUG 21536 / LMG 10740 / 183-1w), this protein is ATP synthase subunit b.